Here is a 268-residue protein sequence, read N- to C-terminus: Homeobox protein Hox-D12 (268 aa).

The disordered stretch occupies residues 102–124 (TPDAPTASEERSRTRPPFAPESS). The segment at residues 200–259 (ARKKRKPYTKQQIAELENEFLVNEFINRQKRKELSNRLNLSDQQVKIWFQNRRMKKKRVV) is a DNA-binding region (homeobox).

The protein belongs to the Abd-B homeobox family.

Its subcellular location is the nucleus. In terms of biological role, sequence-specific transcription factor which is part of a developmental regulatory system that provides cells with specific positional identities on the anterior-posterior axis. The protein is Homeobox protein Hox-D12 (Hoxd12) of Mus musculus (Mouse).